The sequence spans 69 residues: ATP synthase subunits region ORF 1 (69 aa).

The sequence is that of ATP synthase subunits region ORF 1 from Fuscovulum blasticum (Rhodobacter blasticus).